A 229-amino-acid chain; its full sequence is Beta-nerve growth factor (229 aa).

The first 6 residues, 1 to 6 (LIGIQA), serve as a signal peptide directing secretion. Residues 7-109 (EPHTESNVPA…SFNRTHRSKR (103 aa)) constitute a propeptide that is removed on maturation. 3 N-linked (GlcNAc...) asparagine glycosylation sites follow: N57, N102, and N154. Residues 77–112 (FSTQPPPVAADTQDPDLEASGAASFNRTHRSKRSSS) form a disordered region. Disulfide bonds link C124/C189, C167/C217, and C177/C219. A 1-acyl-sn-glycero-3-phospho-(1D-myo-inositol) is bound by residues Y161 and K197. K197 provides a ligand contact to a 1-acyl-sn-glycero-3-phospho-L-serine.

Belongs to the NGF-beta family. Homodimer. The homodimer interacts with a single NTRK1 chain. The homodimer interacts with a single NGFR chain. The NGF dimer interacts with a single SORCS2 chain (via extracellular domain). The NGF precursor (proNGF) binds to a receptor complex formed by SORT1 and NGFR, which leads to NGF endocytosis. Both mature NGF and the immature NGF precursor (proNGF) interact with SORCS2 and with the heterodimer formed by SORCS2 and NGFR (via extracellular domains). The NGF precursor (proNGF) has much higher affinity for SORCS2 than mature NGF. The NGF precursor (proNGF) has much higher affinity for SORT1 than mature NGF. Interacts with ADAM10 in a divalent cation-dependent manner. Interacts with SORCS3.

It is found in the secreted. The protein localises to the endosome lumen. Functionally, nerve growth factor is important for the development and maintenance of the sympathetic and sensory nervous systems. Extracellular ligand for the NTRK1 and NGFR receptors, activates cellular signaling cascades to regulate neuronal proliferation, differentiation and survival. The immature NGF precursor (proNGF) functions as a ligand for the heterodimeric receptor formed by SORCS2 and NGFR, and activates cellular signaling cascades that lead to inactivation of RAC1 and/or RAC2, reorganization of the actin cytoskeleton and neuronal growth cone collapse. In contrast to mature NGF, the precursor form (proNGF) promotes neuronal apoptosis (in vitro). Inhibits metalloproteinase-dependent proteolysis of platelet glycoprotein VI. Binds lysophosphatidylinositol and lysophosphatidylserine between the two chains of the homodimer. The lipid-bound form promotes histamine relase from mast cells, contrary to the lipid-free form. The sequence is that of Beta-nerve growth factor (NGF) from Sus scrofa (Pig).